A 327-amino-acid polypeptide reads, in one-letter code: GMP reductase (327 aa).

Cysteine 175 acts as the Thioimidate intermediate in catalysis. NADP(+) is bound at residue 204–227 (IIADGGIRTNGDVAKSIRFGATMV).

This sequence belongs to the IMPDH/GMPR family. GuaC type 2 subfamily.

It catalyses the reaction IMP + NH4(+) + NADP(+) = GMP + NADPH + 2 H(+). Functionally, catalyzes the irreversible NADPH-dependent deamination of GMP to IMP. It functions in the conversion of nucleobase, nucleoside and nucleotide derivatives of G to A nucleotides, and in maintaining the intracellular balance of A and G nucleotides. In Bacillus anthracis, this protein is GMP reductase.